An 830-amino-acid chain; its full sequence is Serine/threonine-protein kinase pkn2 (830 aa).

Over 1–605 the chain is Cytoplasmic; it reads MLAPDSLVLD…GELLRQRRRE (605 aa). The 271-residue stretch at 13–283 folds into the Protein kinase domain; sequence FRVLRPLGSG…DALAAAHSAL (271 aa). ATP-binding positions include 19 to 27 and K42; that span reads LGSGGMGEV. The Proton acceptor role is filled by D135. Residues 296–326 form a disordered region; that stretch reads VPQPGSGATPSSGTSVFGTGSASGSSSGPTG. The segment covering 299-326 has biased composition (low complexity); sequence PGSGATPSSGTSVFGTGSASGSSSGPTG. Residues 396 to 511 form the Guanylate cyclase domain; that stretch reads TVMLTDIQGF…EPMEVIEAVE (116 aa). A helical transmembrane segment spans residues 606–623; sequence AALVAGAVVLLGAGAAWL. Topologically, residues 624–830 are periplasmic; it reads SQRNDAGTRA…AIKSLKQKSD (207 aa).

It belongs to the protein kinase superfamily. Ser/Thr protein kinase family.

Its subcellular location is the cell membrane. It catalyses the reaction L-seryl-[protein] + ATP = O-phospho-L-seryl-[protein] + ADP + H(+). The enzyme catalyses L-threonyl-[protein] + ATP = O-phospho-L-threonyl-[protein] + ADP + H(+). Regulates the activity of endogenous beta-lactamase or related enzymes, by blocking their secretion by phosphorylation, in response to an external signal yet to be identified. The protein is Serine/threonine-protein kinase pkn2 (pkn2) of Myxococcus xanthus.